Reading from the N-terminus, the 371-residue chain is Protease PrtS (371 aa).

His169 is a binding site for Zn(2+). Glu170 is a catalytic residue. Zn(2+) contacts are provided by His173 and Glu193. His273 (proton donor) is an active-site residue. A disordered region spans residues 352 to 371 (KEEDKDKGKDEGKDKAETKV).

This sequence belongs to the peptidase M4 family. The cofactor is Zn(2+).

The protein resides in the secreted. Inhibited by 8 mM 1,10-phenanthroline, but not by EDTA or PMSF. Its function is as follows. Metalloprotease involved in the inhibition of insect antibacterial peptides. Reduces the antibacterial activity of G.mellonella hemolymph by 50%. Reduces the antibacterial activity of cecropin A by 80% and completely inhibits cecropin B. This chain is Protease PrtS, found in Photorhabdus sp. (strain Az29).